Consider the following 81-residue polypeptide: Omega-conotoxin-like TxO4 (81 aa).

The first 22 residues, 1–22 (MKLTCVVIVAVLFLTAWTFVTA), serve as a signal peptide directing secretion. A propeptide spanning residues 23–52 (VPHSSNALENLYLKARHEMENPEASKLNTR) is cleaved from the precursor. 3 cysteine pairs are disulfide-bonded: Cys-55-Cys-72, Cys-62-Cys-76, and Cys-71-Cys-80. 4-hydroxyproline; partial is present on Pro-70. Trp-75 bears the 6'-bromotryptophan; partial mark.

This sequence belongs to the conotoxin O1 superfamily. Post-translationally, txO4 is found with and without hydroxyproline and these two forms have a bromotryptophan. Truncated TxO4 is found with and without bromotryptophan, and these two forms have no hydroxyproline. Expressed by the venom duct.

It is found in the secreted. In terms of biological role, omega-conotoxins act at presynaptic membranes, they bind and block voltage-gated calcium channels (Cav). The polypeptide is Omega-conotoxin-like TxO4 (Conus textile (Cloth-of-gold cone)).